The sequence spans 132 residues: D-ribose pyranase (132 aa).

H20 serves as the catalytic Proton donor. Substrate contacts are provided by residues D28, H99, and Y121–N123.

Belongs to the RbsD / FucU family. RbsD subfamily. Homodecamer.

Its subcellular location is the cytoplasm. The catalysed reaction is beta-D-ribopyranose = beta-D-ribofuranose. It functions in the pathway carbohydrate metabolism; D-ribose degradation; D-ribose 5-phosphate from beta-D-ribopyranose: step 1/2. Its function is as follows. Catalyzes the interconversion of beta-pyran and beta-furan forms of D-ribose. In Streptococcus agalactiae serotype V (strain ATCC BAA-611 / 2603 V/R), this protein is D-ribose pyranase.